The following is an 883-amino-acid chain: Alanine--tRNA ligase (883 aa).

Zn(2+) contacts are provided by His562, His566, Cys664, and His668.

This sequence belongs to the class-II aminoacyl-tRNA synthetase family. Homotetramer. Requires Zn(2+) as cofactor.

Its subcellular location is the cytoplasm. It catalyses the reaction tRNA(Ala) + L-alanine + ATP = L-alanyl-tRNA(Ala) + AMP + diphosphate. Functionally, catalyzes the attachment of alanine to tRNA(Ala) in a two-step reaction: alanine is first activated by ATP to form Ala-AMP and then transferred to the acceptor end of tRNA(Ala). Also edits incorrectly charged Ser-tRNA(Ala) and Gly-tRNA(Ala) via its editing domain. The protein is Alanine--tRNA ligase of Buchnera aphidicola subsp. Schizaphis graminum (strain Sg).